The primary structure comprises 892 residues: Alpha-actinin-1 (892 aa).

Met-1 carries the N-acetylmethionine modification. Residues 1 to 247 (MDHYDSQQTN…IMTYVSSFYH (247 aa)) are actin-binding. Phosphoserine is present on Ser-6. Residue Tyr-12 is modified to Phosphotyrosine; by FAK1. Calponin-homology (CH) domains follow at residues 31–135 (KQQR…LRFA) and 144–250 (TSAK…HAFS). N6-acetyllysine occurs at positions 95 and 195. Spectrin repeat units follow at residues 274–384 (QLME…WLLN), 394–499 (HLAE…ALER), 509–620 (QLYL…ALTE), and 630–733 (RLRK…EVEN). An interaction with DDN region spans residues 274-733 (QLMEDYEKLA…IARTINEVEN (460 aa)). Residue Ser-471 is modified to Phosphoserine. The residue at position 676 (Lys-676) is an N6-acetyllysine. Ser-677 bears the Phosphoserine mark. EF-hand domains are found at residues 746-781 (EQMN…LGYD) and 787-822 (QGEA…ETAD). Ca(2+) contacts are provided by Asp-759, Asp-761, Ser-763, Thr-765, and Glu-770. Ser-890 is modified (phosphoserine).

Belongs to the alpha-actinin family. In terms of assembly, homodimer; antiparallel. Interacts with MYOZ2, TTID and LPP. Interacts with DDN. Interacts with PSD. Interacts with MICALL2. Interacts with DNM2 and CTTN. Interacts with PDLIM1. Interacts with PDLIM2. Interacts with PDLIM4 (via PDZ domain). Interacts with IGSF8.

The protein resides in the cytoplasm. Its subcellular location is the cytoskeleton. It localises to the myofibril. It is found in the sarcomere. The protein localises to the z line. The protein resides in the cell membrane. Its subcellular location is the cell junction. It localises to the cell projection. It is found in the ruffle. In terms of biological role, F-actin cross-linking protein which is thought to anchor actin to a variety of intracellular structures. Association with IGSF8 regulates the immune synapse formation and is required for efficient T-cell activation. The chain is Alpha-actinin-1 (ACTN1) from Macaca fascicularis (Crab-eating macaque).